Consider the following 335-residue polypeptide: Phospho-N-acetylmuramoyl-pentapeptide-transferase (335 aa).

10 helical membrane-spanning segments follow: residues 5 to 25, 50 to 70, 78 to 98, 114 to 133, 145 to 165, 177 to 197, 200 to 220, 236 to 256, 262 to 282, and 311 to 331; these read IFLA…LMIP, TPTM…LIMA, MVMV…DDFI, LIGQ…RYLG, IHLE…VGIT, LAAG…TLAA, GGGV…AAAV, VFMG…LAVL, ILLI…LQVF, and VVMV…IAYM.

This sequence belongs to the glycosyltransferase 4 family. MraY subfamily. It depends on Mg(2+) as a cofactor.

It is found in the cell membrane. The enzyme catalyses UDP-N-acetyl-alpha-D-muramoyl-L-alanyl-gamma-D-glutamyl-meso-2,6-diaminopimeloyl-D-alanyl-D-alanine + di-trans,octa-cis-undecaprenyl phosphate = di-trans,octa-cis-undecaprenyl diphospho-N-acetyl-alpha-D-muramoyl-L-alanyl-D-glutamyl-meso-2,6-diaminopimeloyl-D-alanyl-D-alanine + UMP. It participates in cell wall biogenesis; peptidoglycan biosynthesis. Catalyzes the initial step of the lipid cycle reactions in the biosynthesis of the cell wall peptidoglycan: transfers peptidoglycan precursor phospho-MurNAc-pentapeptide from UDP-MurNAc-pentapeptide onto the lipid carrier undecaprenyl phosphate, yielding undecaprenyl-pyrophosphoryl-MurNAc-pentapeptide, known as lipid I. The protein is Phospho-N-acetylmuramoyl-pentapeptide-transferase of Desulfitobacterium hafniense (strain DSM 10664 / DCB-2).